A 56-amino-acid polypeptide reads, in one-letter code: Small ribosomal subunit protein uS14 (56 aa).

Positions 21, 24, 39, and 42 each coordinate Zn(2+).

This sequence belongs to the universal ribosomal protein uS14 family. As to quaternary structure, component of the small ribosomal subunit. Mature ribosomes consist of a small (40S) and a large (60S) subunit. The 40S subunit contains about 32 different proteins and 1 molecule of RNA (18S). The 60S subunit contains 45 different proteins and 3 molecules of RNA (25S, 5.8S and 5S). The cofactor is Zn(2+).

Its subcellular location is the cytoplasm. Component of the ribosome, a large ribonucleoprotein complex responsible for the synthesis of proteins in the cell. The small ribosomal subunit (SSU) binds messenger RNAs (mRNAs) and translates the encoded message by selecting cognate aminoacyl-transfer RNA (tRNA) molecules. The large subunit (LSU) contains the ribosomal catalytic site termed the peptidyl transferase center (PTC), which catalyzes the formation of peptide bonds, thereby polymerizing the amino acids delivered by tRNAs into a polypeptide chain. The nascent polypeptides leave the ribosome through a tunnel in the LSU and interact with protein factors that function in enzymatic processing, targeting, and the membrane insertion of nascent chains at the exit of the ribosomal tunnel. The chain is Small ribosomal subunit protein uS14 from Candida albicans (strain SC5314 / ATCC MYA-2876) (Yeast).